The following is a 464-amino-acid chain: ATP synthase subunit beta (464 aa).

154-161 contacts ATP; the sequence is GGAGVGKT.

It belongs to the ATPase alpha/beta chains family. As to quaternary structure, F-type ATPases have 2 components, CF(1) - the catalytic core - and CF(0) - the membrane proton channel. CF(1) has five subunits: alpha(3), beta(3), gamma(1), delta(1), epsilon(1). CF(0) has three main subunits: a(1), b(2) and c(9-12). The alpha and beta chains form an alternating ring which encloses part of the gamma chain. CF(1) is attached to CF(0) by a central stalk formed by the gamma and epsilon chains, while a peripheral stalk is formed by the delta and b chains.

It is found in the cell inner membrane. The enzyme catalyses ATP + H2O + 4 H(+)(in) = ADP + phosphate + 5 H(+)(out). Its function is as follows. Produces ATP from ADP in the presence of a proton gradient across the membrane. The catalytic sites are hosted primarily by the beta subunits. This Blochmanniella floridana protein is ATP synthase subunit beta.